The following is a 308-amino-acid chain: Taste receptor type 2 member 107 (308 aa).

The Extracellular segment spans residues 1 to 7; the sequence is MLSAAEG. A helical membrane pass occupies residues 8–28; the sequence is ILLCVVTSEAVLGVLGDTFIA. Topologically, residues 29-43 are cytoplasmic; sequence LANCMEYAKNKKLSK. A helical membrane pass occupies residues 44-64; it reads IGFILIGLAISRIGVVWIIIL. The Extracellular portion of the chain corresponds to 65-94; sequence QGYMQVFFPHILTFGNITEYITYIWVFLNH. N-linked (GlcNAc...) asparagine glycosylation occurs at asparagine 80. A helical transmembrane segment spans residues 95-115; that stretch reads LSVWFATNLNILYFLKIANFS. The Cytoplasmic segment spans residues 116–127; that stretch reads NSVFLWLKSRVR. The chain crosses the membrane as a helical span at residues 128-148; the sequence is VVFIFLSGCLLTSWLLCFPQF. The Extracellular portion of the chain corresponds to 149–180; the sequence is SKMLNNSKMYWGNTSWLQQQKNVFLINQSLTN. N-linked (GlcNAc...) asparagine glycans are attached at residues asparagine 153, asparagine 161, and asparagine 175. Residues 181–201 traverse the membrane as a helical segment; sequence LGIFFFIIVSLITCFLLIVFL. Topologically, residues 202-232 are cytoplasmic; it reads WRHIRQMHSDGSGLRDLNTEAHVKAMRVLIS. The chain crosses the membrane as a helical span at residues 233 to 253; sequence FAVLFILHFVGLSIQVLCFFL. Over 254–258 the chain is Extracellular; sequence PQNNL. Residues 259–279 traverse the membrane as a helical segment; that stretch reads LFITGLIATCLYPCGHSIILI. Over 280–308 the chain is Cytoplasmic; the sequence is LGNKQLKQASLKALQHLTCCETKRNLSVT.

It belongs to the G-protein coupled receptor T2R family.

The protein localises to the membrane. Functionally, putative taste receptor which may play a role in the perception of bitterness. The polypeptide is Taste receptor type 2 member 107 (Rattus norvegicus (Rat)).